Consider the following 351-residue polypeptide: MNGTEGPYFYVPMVNTTGVVRSPYEYPQYYLVNPAAFAVLGAYMFFLIIFGFPINFLTLYVTLEHKKLRTPLNYILLNLAVADLFMVIGGFTTTMYSSMHGYFVLGRLGCNLEGFSATLGGMISLWSLAVLAIERWVVVCKPTSNFRFGENHAIMGVSLTWTMALACTVPPLVGWSRYIPEGMQCSCGIDYYTRAEGFNNESFVLYMFFCHFMVPLIIIFFCYGRLLCAVKEAAAAQQESETTQRAEREVTRMVILMVIGYLVCWLPYASVAWFIFTHQGSEFGPLFMTIPAFFAKSSSIYNPVIYICMNKQFRNCMITTLFCGKNPFEGEEEGASSTKTEASSASSVSPA.

The Extracellular segment spans residues 1-36 (MNGTEGPYFYVPMVNTTGVVRSPYEYPQYYLVNPAA). 2 N-linked (GlcNAc...) asparagine glycosylation sites follow: asparagine 2 and asparagine 15. Residues 37–61 (FAVLGAYMFFLIIFGFPINFLTLYV) traverse the membrane as a helical segment. Residues 62-73 (TLEHKKLRTPLN) are Cytoplasmic-facing. A helical transmembrane segment spans residues 74-96 (YILLNLAVADLFMVIGGFTTTMY). At 97-110 (SSMHGYFVLGRLGC) the chain is on the extracellular side. Cysteine 110 and cysteine 187 are oxidised to a cystine. The chain crosses the membrane as a helical span at residues 111–133 (NLEGFSATLGGMISLWSLAVLAI). A 'Ionic lock' involved in activated form stabilization motif is present at residues 134–136 (ERW). Residues 134 to 152 (ERWVVVCKPTSNFRFGENH) lie on the Cytoplasmic side of the membrane. A helical transmembrane segment spans residues 153–173 (AIMGVSLTWTMALACTVPPLV). Residues 174–202 (GWSRYIPEGMQCSCGIDYYTRAEGFNNES) lie on the Extracellular side of the membrane. N-linked (GlcNAc...) asparagine glycosylation is present at asparagine 200. Residues 203-224 (FVLYMFFCHFMVPLIIIFFCYG) traverse the membrane as a helical segment. Residues 225 to 252 (RLLCAVKEAAAAQQESETTQRAEREVTR) are Cytoplasmic-facing. The chain crosses the membrane as a helical span at residues 253 to 274 (MVILMVIGYLVCWLPYASVAWF). The Extracellular segment spans residues 275–286 (IFTHQGSEFGPL). The chain crosses the membrane as a helical span at residues 287 to 308 (FMTIPAFFAKSSSIYNPVIYIC). Lysine 296 carries the post-translational modification N6-(retinylidene)lysine. At 309–351 (MNKQFRNCMITTLFCGKNPFEGEEEGASSTKTEASSASSVSPA) the chain is on the cytoplasmic side. Cysteine 323 carries S-palmitoyl cysteine lipidation. Residues 330 to 351 (GEEEGASSTKTEASSASSVSPA) are disordered. A compositionally biased stretch (low complexity) spans 335–351 (ASSTKTEASSASSVSPA).

This sequence belongs to the G-protein coupled receptor 1 family. Opsin subfamily. Phosphorylated on some or all of the serine and threonine residues present in the C-terminal region. In terms of processing, contains one covalently linked retinal chromophore.

It localises to the membrane. Its subcellular location is the cell projection. It is found in the cilium. The protein resides in the photoreceptor outer segment. Its function is as follows. Photoreceptor required for image-forming vision at low light intensity. While most salt water fish species use retinal as chromophore, most freshwater fish use 3-dehydroretinal, or a mixture of retinal and 3-dehydroretinal. Light-induced isomerization of 11-cis to all-trans retinal triggers a conformational change that activates signaling via G-proteins. Subsequent receptor phosphorylation mediates displacement of the bound G-protein alpha subunit by arrestin and terminates signaling. The chain is Rhodopsin (rho) from Neoniphon sammara (Spotfin squirrelfish).